We begin with the raw amino-acid sequence, 596 residues long: Elongation factor 4 (596 aa).

One can recognise a tr-type G domain in the interval 2 to 184; sequence KHIRNFSIIA…VIVEQIPPPE (183 aa). Residues 14–19 and 131–134 each bind GTP; these read DHGKST and NKID.

It belongs to the TRAFAC class translation factor GTPase superfamily. Classic translation factor GTPase family. LepA subfamily.

Its subcellular location is the cell inner membrane. It catalyses the reaction GTP + H2O = GDP + phosphate + H(+). Its function is as follows. Required for accurate and efficient protein synthesis under certain stress conditions. May act as a fidelity factor of the translation reaction, by catalyzing a one-codon backward translocation of tRNAs on improperly translocated ribosomes. Back-translocation proceeds from a post-translocation (POST) complex to a pre-translocation (PRE) complex, thus giving elongation factor G a second chance to translocate the tRNAs correctly. Binds to ribosomes in a GTP-dependent manner. In Shewanella sp. (strain MR-7), this protein is Elongation factor 4.